We begin with the raw amino-acid sequence, 405 residues long: Accessory Sec system protein translocase subunit SecY2 (405 aa).

10 consecutive transmembrane segments (helical) span residues 14–34 (LFTL…LPFV), 63–83 (LSIF…WQMF), 104–124 (MYLT…RLPV), 131–151 (ILVV…LVWL), 156–176 (ASMG…LNIP), 191–211 (GIIV…ALMY), 247–267 (MYVM…GFIF), 285–305 (PLWV…FAFV), 343–363 (FSVI…LFVL), and 368–388 (LLRL…IFTI).

This sequence belongs to the SecY/SEC61-alpha family. SecY2 subfamily. In terms of assembly, component of the accessory SecA2/SecY2 protein translocase complex required to export cell wall proteins. May form heterotrimers with SecE and SecG subunits.

It is found in the cell membrane. In terms of biological role, part of the accessory SecA2/SecY2 system specifically required for export of possible cell wall proteins. The central subunit of a protein translocation channel. The chain is Accessory Sec system protein translocase subunit SecY2 from Streptococcus pneumoniae (strain CGSP14).